The chain runs to 88 residues: Large ribosomal subunit protein eL37 (88 aa).

The disordered stretch occupies residues 1-24; the sequence is MTKGTTSFGKRHNKSHTQCRRCGR. Basic residues predominate over residues 9 to 24; that stretch reads GKRHNKSHTQCRRCGR. 4 residues coordinate Zn(2+): cysteine 19, cysteine 22, cysteine 34, and cysteine 37. The segment at 19 to 37 adopts a C4-type zinc-finger fold; sequence CRRCGRKSYHIQKKTCSSC.

It belongs to the eukaryotic ribosomal protein eL37 family. Requires Zn(2+) as cofactor.

Its function is as follows. Binds to the 23S rRNA. The polypeptide is Large ribosomal subunit protein eL37 (RPL37) (Schistosoma mansoni (Blood fluke)).